A 773-amino-acid polypeptide reads, in one-letter code: Mitochondrial inner membrane m-AAA protease component yta12 (773 aa).

Positions Phe83 to Asn119 are disordered. Positions Ser87–Ala101 are enriched in low complexity. 2 helical membrane-spanning segments follow: residues Val126–Leu146 and Val239–Leu259. ATP contacts are provided by Val298, Ala299, Thr340, Gly341, Lys342, Thr343, Leu344, and His479. Position 561 (His561) interacts with Zn(2+). Residue Glu562 is part of the active site. 2 residues coordinate Zn(2+): His565 and Asp638. The tract at residues Glu752–Ala773 is disordered. Residues Asn761–Ala773 show a composition bias toward pro residues.

In the N-terminal section; belongs to the AAA ATPase family. The protein in the C-terminal section; belongs to the peptidase M41 family. In terms of assembly, component of the m-AAA protease complex. Zn(2+) serves as cofactor.

The protein resides in the mitochondrion membrane. The catalysed reaction is ATP + H2O = ADP + phosphate + H(+). Catalytic component of the m-AAA protease, a protease that plays a key role in proteostasis of inner mitochondrial membrane proteins. Possesses both ATPase and protease activities: the ATPase activity is required to unfold substrates, threading them into the internal proteolytic cavity for hydrolysis into small peptide fragments. The complex is necessary for the assembly of mitochondrial respiratory chain and ATPase complexes. The m-AAA protease carries out protein quality control in the inner membrane of the mitochondria by mediating degradation of mistranslated or misfolded polypeptides. It also mediates protein maturation of the mitochondrial ribosomal subunit mrpl32/bL32m by catalyzing the cleavage of the presequence of mrpl32/bL32m prior to assembly into the mitochondrial ribosome. Also acts as a membrane protein dislocase: required to dislocate moderately hydrophobic transmembrane segments from the membrane. This chain is Mitochondrial inner membrane m-AAA protease component yta12 (yta12), found in Schizosaccharomyces pombe (strain 972 / ATCC 24843) (Fission yeast).